A 389-amino-acid chain; its full sequence is ELAV-like protein 2 (389 aa).

RRM domains are found at residues 66–145, 153–233, and 306–384; these read TNLI…YARP, ANLY…FANN, and WCIF…FKTS.

The protein belongs to the RRM elav family. In terms of assembly, part of a ribonucleoprotein (RNP) complex, at least composed of elavl1/elrA and/or elavl2/elrB, igf2bp3/vg1RBP, ddx6/Xp54, ybx2/frgy2, lsm14b/rap55b and, in a subset of RNP complexes, stau1/staufen. Binds RNA as a homooligomer. In terms of tissue distribution, expressed in brain, testis and ovary. Ovarian expression is restricted to follicle cells surrounding the oocyte. From the early tailbud stage, expression is neural-specific and is seen in both the central and peripheral nervous system in differentiating neurons but not proliferating precursors. Expressed in the retina from stage 32 with expression becoming restricted to the ganglion cell layer by later stages.

The protein localises to the cytoplasm. Its subcellular location is the cell cortex. Binds to poly-U elements and AU-rich elements (AREs) in the 3'-UTR of target mRNAs. Required for the vegetal localization of vg1 mRNA. Probably required for nervous system development. This chain is ELAV-like protein 2 (elavl2), found in Xenopus laevis (African clawed frog).